Consider the following 279-residue polypeptide: Replication factor A protein 2 (279 aa).

A disordered region spans residues 26 to 47 (GAGFNEYDQSSQPSVDRQQGAG). Residues 32–46 (YDQSSQPSVDRQQGA) show a composition bias toward polar residues. Positions 80–140 (VTFVGVLRNI…GNIKIFSGKI (61 aa)) form a DNA-binding region, OB.

This sequence belongs to the replication factor A protein 2 family. As to quaternary structure, heterotrimer of 68, 30, and 12 kDa chains. Phosphorylated in a cell cycle-dependent manner. Hypophosphorylated in G1, becomes phosphorylated at the G1/S boundary, it is maintained in this state through the M phase.

It localises to the nucleus. Binds to single-stranded sequences. This chain is Replication factor A protein 2 (ssb2), found in Schizosaccharomyces pombe (strain 972 / ATCC 24843) (Fission yeast).